Consider the following 183-residue polypeptide: Guanylate kinase (183 aa).

Residues 4–182 (GRVVVLTGPS…AITALEAAIF (179 aa)) enclose the Guanylate kinase-like domain. 11-18 (GPSGVGKG) provides a ligand contact to ATP.

This sequence belongs to the guanylate kinase family.

The protein resides in the cytoplasm. The enzyme catalyses GMP + ATP = GDP + ADP. It carries out the reaction dZMP + ATP = dZDP + ADP. The protein operates within purine metabolism. Essential for recycling GMP and indirectly, cGMP. Its function is as follows. (Microbial infection) Catalyzes the phosphorylation of dZMP to dZDP, when the bacterium is infected by a phage that produces the substrate for the synthesis of dZTP (2- amino-2'-deoxyadenosine 5'-triphosphate), which is then used by the phage as a DNA polymerase substrate. The protein is Guanylate kinase of Synechococcus sp. (strain ATCC 27144 / PCC 6301 / SAUG 1402/1) (Anacystis nidulans).